We begin with the raw amino-acid sequence, 393 residues long: F-box/kelch-repeat protein At4g19865 (393 aa).

The segment at 1–30 (MNFQVEPPEKKKTKNSSPPHSPPSSSSPSL) is disordered. An F-box domain is found at 27 to 73 (SPSLSLLPEEIVVHCLARISRLYYPTLSLVSKSFRSILSSTELYATR). 4 Kelch repeats span residues 148–190 (EIYV…FHDG), 191–237 (KIYV…RSGV), 239–272 (EGKIEFGNVNEMCAYDTKLCKWEYCVNKSAALRS), and 273–320 (ECMI…GGSS).

The polypeptide is F-box/kelch-repeat protein At4g19865 (Arabidopsis thaliana (Mouse-ear cress)).